Consider the following 855-residue polypeptide: Inactive rhomboid protein 1 (855 aa).

At 1–411 (MSEARRDSTS…HRPFFTYWLT (411 aa)) the chain is on the cytoplasmic side. Phosphoserine is present on residues serine 76 and serine 176. Phosphothreonine is present on residues threonine 180 and threonine 183. Phosphoserine is present on serine 390. A helical membrane pass occupies residues 412-432 (FVHSLVTILAVCIYGIAPVGF). Topologically, residues 433–655 (SQHETVDSVL…NPEVPDQFYR (223 aa)) are lumenal. N-linked (GlcNAc...) asparagine glycosylation is present at asparagine 583. The chain crosses the membrane as a helical span at residues 656–676 (LWLSLFLHAGILHCLVSICFQ). The Cytoplasmic segment spans residues 677–691 (MTVLRDLEKLAGWHR). A helical transmembrane segment spans residues 692–712 (IAIIYLLSGVTGNLASAIFLP). At 713 to 714 (YR) the chain is on the lumenal side. The helical transmembrane segment at 715-735 (AEVGPAGSQFGILACLFVELF) threads the bilayer. The Cytoplasmic segment spans residues 736-746 (QSWQILARPWR). The chain crosses the membrane as a helical span at residues 747–767 (AFFKLLAVVLFLFTFGLLPWI). The Lumenal portion of the chain corresponds to 768–772 (DNFAH). A helical membrane pass occupies residues 773-793 (ISGFISGLFLSFAFLPYISFG). Topologically, residues 794-803 (KFDLYRKRCQ) are cytoplasmic. The helical transmembrane segment at 804 to 824 (IIIFQVVFLGLLAGLVVLFYV) threads the bilayer. Topologically, residues 825–855 (YPVRCEWCEFLTCIPFTDKFCEKYELDAQLH) are lumenal.

This sequence belongs to the peptidase S54 family. As to quaternary structure, homodimer, or homooligomer. Interacts with TGFA and HBEGF. Interacts with EGF; may retain EGF in the endoplasmic reticulum and regulates its degradation through the endoplasmic reticulum-associated degradation (ERAD). Interacts (via cytoplasmic N-terminus) with FRMD8/iTAP; this interaction leads to mutual protein stabilization. Interacts with ADAM17/TACE. In terms of processing, N-glycosylated. Highly expressed in cerebellum, cerebrum, heart, skeletal muscle, placenta, pancreatic islet and testis. Detected at lower levels in colon, kidney, small intestine and lung.

It is found in the endoplasmic reticulum membrane. The protein resides in the golgi apparatus membrane. Regulates ADAM17 protease, a sheddase of the epidermal growth factor (EGF) receptor ligands and TNF, thereby plays a role in sleep, cell survival, proliferation, migration and inflammation. Does not exhibit any protease activity on its own. This chain is Inactive rhomboid protein 1 (RHBDF1), found in Homo sapiens (Human).